A 342-amino-acid polypeptide reads, in one-letter code: MEIINACLKNVGVEENMIEKVIETFQKENDECYNLVHIFNKAAIVFHRNGQHKKSLEMYEKAFGNIFNGEFALSDLFYSVNGMASMYQALGDYDIAIKKYNSVIKIIKDMCLDNNSDLVYALMGIASISQIKGNYDEALSKYNEALEINEKLYGRNHIETAFVLNRLGMLYHELDDNDKSIDHFNESLKIYREKYPNKLFNIAFTISRLAQSLLKMGNDSEALEKYQESIDIFNKIFTISHQAVAFSLYGIGTVYEFRSEYSKALEKYQESLQTYKNVYERSEKYQHYDIASCLYKIGLVYKLSGNDNESTTYLNQANQMFESTSTNINDKNYQACKKFLQD.

TPR repeat units follow at residues 36 to 69 (VHIF…IFNG), 77 to 110 (FYSV…IKDM), 119 to 152 (VYAL…NEKL), 161 to 194 (AFVL…YREK), 203 to 236 (AFTI…FNKI), 245 to 278 (AFSL…YKNV), and 291 to 324 (ASCL…FEST).

The chain is Putative TPR repeat-containing protein R856 from Acanthamoeba polyphaga mimivirus (APMV).